Here is a 418-residue protein sequence, read N- to C-terminus: Probable serine hydroxymethyltransferase (418 aa).

(6S)-5,6,7,8-tetrahydrofolate-binding positions include Leu118 and 122-124; that span reads GHL. Residue Lys226 is modified to N6-(pyridoxal phosphate)lysine. A (6S)-5,6,7,8-tetrahydrofolate-binding site is contributed by 351 to 353; the sequence is SPF.

Belongs to the SHMT family. As to quaternary structure, homodimer. Requires pyridoxal 5'-phosphate as cofactor.

The protein resides in the cytoplasm. The catalysed reaction is (6R)-5,10-methylene-5,6,7,8-tetrahydrofolate + glycine + H2O = (6S)-5,6,7,8-tetrahydrofolate + L-serine. Its pathway is one-carbon metabolism; tetrahydrofolate interconversion. In terms of biological role, catalyzes the reversible interconversion of serine and glycine with tetrahydrofolate (THF) serving as the one-carbon carrier. This reaction serves as the major source of one-carbon groups required for the biosynthesis of purines, thymidylate, methionine, and other important biomolecules. In Mesomycoplasma hyopneumoniae (strain 232) (Mycoplasma hyopneumoniae), this protein is Probable serine hydroxymethyltransferase.